Here is a 462-residue protein sequence, read N- to C-terminus: MTTTTTILETCHIPPPPAANDLSIPLSFFDIKWLHYHPVRRLLFYHHPSSKSQFLHTIVPHLKQSLSLALTHYLPVAGNLLYPSNTEKFPQLRYAAGDSVPVTIAESNSDFESLTGNHTRDADQFYDLLPPIPPIEEESDWKLINIFAVQITLFPGEGICIGFSNHHCLGDARSIVGFISAWGEINGIGGYEGFLSNHSDSLSLPIFDRSFINDPNKIDAIFWKVLRNIPLKTASFPLPTNRVRSTFLLRRSDIEKLKTATKSPASSFVAAAAFVWSCMVKSGDKSDENAPELFIIPADARGRVDPPIPENYFGNCIVSSVAQVERGKLAAEDGFAVAAEAIGGEIEGKLKNRDEILRGAENWMSDIFKCFGMSVLGVSGSPKFDLLKADFGWGKARKLEVLSIDGENHSMSLCSSSDFNGGLEVGLSLPRERMAAFEEVFRASIMAASGPARRSPALVEPL.

Residues His167 and Asp390 each act as proton acceptor in the active site.

The protein belongs to the plant acyltransferase family. As to expression, detected in petals and sepals, and at lower levels in bracts and red stems.

The catalysed reaction is pelargonidin 3-O-(6-O-[(E)-caffeoyl]-beta-D-glucoside) 5-O-beta-D-glucoside + malonyl-CoA = 4'''-demalonylsalvianin + CoA. Its pathway is pigment biosynthesis; anthocyanin biosynthesis. Completely inhibited by 10 mM p-coumaric acid, this inhibition is rapid, reversible and non-competitive. Completely inhibited by 0.1 mM Cu(2+), 0.1 mM Hg(2+) and 10 mM caffeic acid. Partially inhibited by 5 mM N-ethylmaleimide, 1 mM diethylpyrocarbonate and 1 mM acetyl-CoA. In terms of biological role, catalyzes the transfer of a malonyl group from malonyl-CoA to the 6'''-hydroxyl group of the 5-glucosyl moiety of anthocyanins. Active towards bisdemalonylsalvianin (pelargonidin 3-O-(6-caffeoyl-beta-D-glucoside) 5-O-beta-D-glucoside) and shisonin, but not towards nodemalonylsalvianin, salvianin, pelargonidin 3,5-diglucoside and delphinidin 3,5-diglucoside. The sequence is that of Malonyl-coenzyme:anthocyanin 5-O-glucoside-6'''-O-malonyltransferase from Salvia splendens (Scarlet sage).